We begin with the raw amino-acid sequence, 392 residues long: MTTIGTPLRTNATKVMMLGSGELGKEVVIELQPLGVEVIAVDRYDNAPAQQVAHRAYTISMLDGNALRDLVEKEKPDFIVPEVEAIATATLVELEQEGYNVIPTAKATQLTMNREGIRRLAAEELGLKTSPYRFVDNFEQFQQAIQEIGIPCVVKPIMSSSGHGQSVIKSEADIQQAWDYSQQGGRAGGGRVIVEGFIKFDYEITQLTVRHIHGIVFSSHRHIQVDGDYRESWQPQQMSDIALKKAQETAEKITSALGGRGIFGVELFVCGDEIIFNEVSPRPHDTGIVTMASQELSQFALHARAILGLPIPEIYRISPAASKAIVVEGKSDNVRFGGVDKVLAEIGTNIRLFGKGEVNGHRRLGVILARDENTVRALETSRRAYDKLDIQL.

N(1)-(5-phospho-beta-D-ribosyl)glycinamide is bound by residues 22 to 23 (EL) and glutamate 82. Residues arginine 114, lysine 155, 160-165 (SSGHGQ), 195-198 (EGFI), and glutamate 203 each bind ATP. In terms of domain architecture, ATP-grasp spans 119 to 307 (RLAAEELGLK…QFALHARAIL (189 aa)). The Mg(2+) site is built by glutamate 266 and glutamate 278. N(1)-(5-phospho-beta-D-ribosyl)glycinamide is bound by residues aspartate 285, lysine 355, and 362–363 (RR).

Belongs to the PurK/PurT family. In terms of assembly, homodimer.

The protein localises to the cell inner membrane. It carries out the reaction N(1)-(5-phospho-beta-D-ribosyl)glycinamide + formate + ATP = N(2)-formyl-N(1)-(5-phospho-beta-D-ribosyl)glycinamide + ADP + phosphate + H(+). The protein operates within purine metabolism; IMP biosynthesis via de novo pathway; N(2)-formyl-N(1)-(5-phospho-D-ribosyl)glycinamide from N(1)-(5-phospho-D-ribosyl)glycinamide (formate route): step 1/1. Its function is as follows. Involved in the de novo purine biosynthesis. Catalyzes the transfer of formate to 5-phospho-ribosyl-glycinamide (GAR), producing 5-phospho-ribosyl-N-formylglycinamide (FGAR). Formate is provided by PurU via hydrolysis of 10-formyl-tetrahydrofolate. This is Formate-dependent phosphoribosylglycinamide formyltransferase from Mannheimia haemolytica (Pasteurella haemolytica).